A 1414-amino-acid polypeptide reads, in one-letter code: DNA-directed RNA polymerase subunit beta' (1414 aa).

Zn(2+) is bound by residues Cys-70, Cys-72, Cys-85, and Cys-88. Asp-460, Asp-462, and Asp-464 together coordinate Mg(2+). 4 residues coordinate Zn(2+): Cys-814, Cys-888, Cys-895, and Cys-898. A disordered region spans residues 1378-1414; that stretch reads EREAARQLANPFEDAPVTVGGEPEAPAADTPSDDSAE.

It belongs to the RNA polymerase beta' chain family. The RNAP catalytic core consists of 2 alpha, 1 beta, 1 beta' and 1 omega subunit. When a sigma factor is associated with the core the holoenzyme is formed, which can initiate transcription. Mg(2+) is required as a cofactor. The cofactor is Zn(2+).

It catalyses the reaction RNA(n) + a ribonucleoside 5'-triphosphate = RNA(n+1) + diphosphate. In terms of biological role, DNA-dependent RNA polymerase catalyzes the transcription of DNA into RNA using the four ribonucleoside triphosphates as substrates. The protein is DNA-directed RNA polymerase subunit beta' of Bordetella bronchiseptica (strain ATCC BAA-588 / NCTC 13252 / RB50) (Alcaligenes bronchisepticus).